A 646-amino-acid chain; its full sequence is ATP-dependent zinc metalloprotease FtsH (646 aa).

The disordered stretch occupies residues 1–27 (MTNNQTDRPRPPGPESRRFDNNDKNNR). Over 1 to 35 (MTNNQTDRPRPPGPESRRFDNNDKNNRNRWGPIPS) the chain is Cytoplasmic. The span at 7–26 (DRPRPPGPESRRFDNNDKNN) shows a compositional bias: basic and acidic residues. Residues 36–56 (WAWIVLIVALLLNWLVAPILF) traverse the membrane as a helical segment. Residues 57–144 (PEGKGAVSIP…QPESSTRSLL (88 aa)) are Extracellular-facing. Residues 145–165 (LSILISFGPTILFFLLFLWLI) form a helical membrane-spanning segment. Residues 166–646 (SKAQSSQQGL…GLGEKQPEPA (481 aa)) are Cytoplasmic-facing. 237-244 (GPPGTGKT) lines the ATP pocket. Residue histidine 459 participates in Zn(2+) binding. The active site involves glutamate 460. Positions 463 and 535 each coordinate Zn(2+).

It in the central section; belongs to the AAA ATPase family. The protein in the C-terminal section; belongs to the peptidase M41 family. In terms of assembly, homohexamer. It depends on Zn(2+) as a cofactor.

It localises to the cell membrane. Acts as a processive, ATP-dependent zinc metallopeptidase for both cytoplasmic and membrane proteins. Plays a role in the quality control of integral membrane proteins. The sequence is that of ATP-dependent zinc metalloprotease FtsH from Thermobaculum terrenum (strain ATCC BAA-798 / CCMEE 7001 / YNP1).